The primary structure comprises 149 residues: MNDTVLVLNGPNLNLLGKRQPEIYGRETLADVEALCRETAAGFGLAVDFRQSNAEHALIDAIHEFRVGSAGIVINAGAYTHTSVALLDALNTCEVPVIECHISNVHRREAFRHHSYISLAATSVLAGFGTHGYALAIRHLAHLRAGRPA.

The Proton acceptor role is filled by Tyr-24. Substrate is bound by residues Asn-75, His-81, and Asp-88. His-101 acts as the Proton donor in catalysis. Residues 102 to 103 (IS) and Arg-112 contribute to the substrate site.

This sequence belongs to the type-II 3-dehydroquinase family. In terms of assembly, homododecamer.

The enzyme catalyses 3-dehydroquinate = 3-dehydroshikimate + H2O. It participates in metabolic intermediate biosynthesis; chorismate biosynthesis; chorismate from D-erythrose 4-phosphate and phosphoenolpyruvate: step 3/7. Catalyzes a trans-dehydration via an enolate intermediate. This is 3-dehydroquinate dehydratase from Methylobacterium radiotolerans (strain ATCC 27329 / DSM 1819 / JCM 2831 / NBRC 15690 / NCIMB 10815 / 0-1).